The sequence spans 116 residues: Large ribosomal subunit protein uL18 (116 aa).

It belongs to the universal ribosomal protein uL18 family. Part of the 50S ribosomal subunit; part of the 5S rRNA/L5/L18/L25 subcomplex. Contacts the 5S and 23S rRNAs.

Its function is as follows. This is one of the proteins that bind and probably mediate the attachment of the 5S RNA into the large ribosomal subunit, where it forms part of the central protuberance. The sequence is that of Large ribosomal subunit protein uL18 from Alcanivorax borkumensis (strain ATCC 700651 / DSM 11573 / NCIMB 13689 / SK2).